The primary structure comprises 32 residues: Protamine-3A (32 aa).

The segment at 1–32 is disordered; that stretch reads PRRRRRSSSRPIRRRRRPRVSRRRRRGGRRRR.

Testis.

It is found in the nucleus. The protein localises to the chromosome. In terms of biological role, protamines substitute for histones in the chromatin of sperm during the haploid phase of spermatogenesis. They compact sperm DNA into a highly condensed, stable and inactive complex. In Oncorhynchus mykiss (Rainbow trout), this protein is Protamine-3A.